The primary structure comprises 97 residues: Aspartyl/glutamyl-tRNA(Asn/Gln) amidotransferase subunit C (97 aa).

The protein belongs to the GatC family. Heterotrimer of A, B and C subunits.

It carries out the reaction L-glutamyl-tRNA(Gln) + L-glutamine + ATP + H2O = L-glutaminyl-tRNA(Gln) + L-glutamate + ADP + phosphate + H(+). It catalyses the reaction L-aspartyl-tRNA(Asn) + L-glutamine + ATP + H2O = L-asparaginyl-tRNA(Asn) + L-glutamate + ADP + phosphate + 2 H(+). In terms of biological role, allows the formation of correctly charged Asn-tRNA(Asn) or Gln-tRNA(Gln) through the transamidation of misacylated Asp-tRNA(Asn) or Glu-tRNA(Gln) in organisms which lack either or both of asparaginyl-tRNA or glutaminyl-tRNA synthetases. The reaction takes place in the presence of glutamine and ATP through an activated phospho-Asp-tRNA(Asn) or phospho-Glu-tRNA(Gln). The protein is Aspartyl/glutamyl-tRNA(Asn/Gln) amidotransferase subunit C of Synechococcus sp. (strain CC9902).